The chain runs to 319 residues: Protein MGF 360-8L (319 aa).

Belongs to the asfivirus MGF 360 family.

Plays a role in virus cell tropism, and may be required for efficient virus replication in macrophages. The chain is Protein MGF 360-8L from Ornithodoros (relapsing fever ticks).